The chain runs to 507 residues: MMAAAPIQQNGTHTGVPIDLDPPDSRKRPLEAPPEAGSTKRTNTGEDGQYFLKVLIPSYAAGSIIGKGGQTIVQLQKETGATIKLSKSKDFYPGTTERVCLIQGTIEALNAVHGFIAEKIREMPQNVAKTEPVSILQPQTTVNPDRIKQTLPSSPTTTKSSPSDPMTTSRANQVKIIVPNSTAGLIIGKGGATVKAIMEQSGAWVQLSQKPDGINLQERVVTVSGEPEQNRKAVELIIQKIQEDPQSGSCLNISYANVTGPVANSNPTGSPYANTAEVLPTAAAAAGLLGHANLAGVAAFPAVLSGFTGNDLVAITSALNTLASYGYNLNTLGLGLSQAAATGALAAAAASANPAAAAANLLATYASEASASGSTAGGTAGTFALGSLAAATAATNGYFGAASPLAASAILGTEKSTDGSKDVVEIAVPENLVGAILGKGGKTLVEYQELTGARIQISKKGEFVPGTRNRKVTITGTPAATQAAQYLITQRITYEQGVRAANPQKVG.

The interval M1 to T44 is disordered. The short motif at K27–N43 is the Bipartite nuclear localization signal element. The KH 1 domain occupies Q49 to I116. A disordered region spans residues Q139–A171. The segment covering T150–S169 has biased composition (low complexity). A Phosphoserine modification is found at S154. KH domains follow at residues A171–I237 and K421–I488. A required for RNA binding region spans residues G419 to P503.

As to quaternary structure, interacts with PTBP2; the interaction is direct. As to expression, expressed in neurons of the cortex, sub-cortex, cerebellum and brainstem (at protein level). Expressed in motor neurons, but not in glia.

The protein resides in the nucleus. Functions to regulate alternative splicing in neurons by binding pre-mRNA in a sequence-specific manner to activate exon inclusion or exclusion. It binds specifically to the sequences 5'-YCAY-3' and regulates splicing in only a subset of regulated exons. Binding to an exonic 5'-YCAY-3' cluster changes the protein complexes assembled on pre-mRNA, blocking U1 snRNP binding and exon inclusion, whereas binding to an intronic 5'-YCAY-3' cluster enhances spliceosome assembly and exon inclusion. Binding to 5'-YCAY-3' clusters results in a local and asymmetric action to regulate spliceosome assembly and alternative splicing in neurons. Binding to an exonic 5'-YCAY-3' cluster changed the protein complexes assembled on pre-mRNA, blocking U1 snRNP (small nuclear ribonucleoprotein) binding and exon inclusion, whereas binding to an intronic 5'-YCAY-3' cluster enhanced spliceosome assembly and exon inclusion. With NOVA1, they perform unique biological functions in different brain areas and cell types. Autoregulates its own expression by acting as a splicing repressor. Acts to activate the inclusion of exon E3A in the glycine receptor alpha-2 chain and of exon E9 in gamma-aminobutyric-acid receptor gamma-2 subunit via a distal downstream UCAU-rich intronic splicing enhancer. Acts to regulate a novel glycine receptor alpha-2 chain splice variant (alpha-2N) in developing spinal cord. This is RNA-binding protein Nova-1 from Mus musculus (Mouse).